We begin with the raw amino-acid sequence, 45 residues long: Mu-conotoxin-like Cal 12.1.2d (45 aa).

Disulfide bonds link C3/C16, C11/C28, C18/C33, and C27/C39. W17 bears the 6'-bromotryptophan mark. P23 carries the 4-hydroxyproline modification. 6'-bromotryptophan occurs at positions 37 and 38. P40 carries the post-translational modification 4-hydroxyproline.

As to expression, expressed by the venom duct.

It localises to the secreted. In terms of biological role, mu-conotoxins block voltage-gated sodium channels. This toxin reversibly blocks voltage-gated sodium channel in cephalopods, with no alteration in the voltage dependence of sodium conductance or on the kinetics of inactivation. The sequence is that of Mu-conotoxin-like Cal 12.1.2d from Californiconus californicus (California cone).